The following is a 397-amino-acid chain: Multidrug resistance protein MdtH (397 aa).

Helical transmembrane passes span 11–31 (WFLA…MPMI), 71–91 (FGAR…FASL), 94–114 (AQSG…GCLF), 137–157 (LLMM…SWLL), 163–183 (YVCL…LLIL), 211–231 (LVLI…IFPI), 242–262 (AVGW…YPLA), 291–311 (FATT…GIVI), 338–358 (LGLA…HDYA), and 366–386 (LPWL…VNCF).

This sequence belongs to the major facilitator superfamily. DHA1 family. MdtH (TC 2.A.1.2.21) subfamily.

The protein localises to the cell inner membrane. This Aeromonas salmonicida (strain A449) protein is Multidrug resistance protein MdtH.